The primary structure comprises 183 residues: Ferritin light chain 1 (183 aa).

One can recognise a Ferritin-like diiron domain in the interval 7 to 156 (QNYSTEVEAA…NHLTNLRRVA (150 aa)). Fe cation-binding residues include Glu54, Glu57, Glu58, Glu61, and Glu64.

The protein belongs to the ferritin family. As to quaternary structure, oligomer of 24 subunits. There are two types of subunits: L (light) chain and H (heavy) chain. The major chain can be light or heavy, depending on the species and tissue type. The functional molecule forms a roughly spherical shell with a diameter of 12 nm and contains a central cavity into which the insoluble mineral iron core is deposited. Interacts with NCOA4. In rat liver, the light chain is the major chain.

Its subcellular location is the cytoplasmic vesicle. The protein localises to the autophagosome. It is found in the cytoplasm. The protein resides in the autolysosome. Functionally, stores iron in a soluble, non-toxic, readily available form. Important for iron homeostasis. Iron is taken up in the ferrous form and deposited as ferric hydroxides after oxidation. Also plays a role in delivery of iron to cells. Mediates iron uptake in capsule cells of the developing kidney. Delivery to lysosomes by the cargo receptor NCOA4 for autophagic degradation and release or iron. The chain is Ferritin light chain 1 (Ftl1) from Rattus norvegicus (Rat).